A 285-amino-acid chain; its full sequence is Iodotyrosine deiodinase 1 (285 aa).

Residues 1–21 (MFLLTPVLVAVVCILVIWVFK) traverse the membrane as a helical segment. Residues 96–100 (RRSIR) and 124–125 (SG) each bind FMN. 4 residues coordinate 3,5-diiodo-L-tyrosine: Ala126, Glu153, Tyr157, and Lys178. 4 residues coordinate 3-iodo-L-tyrosine: Ala126, Glu153, Tyr157, and Lys178. FMN is bound by residues 233-235 (TTT) and Arg275.

The protein belongs to the nitroreductase family. In terms of assembly, homodimer. FMN serves as cofactor.

The protein resides in the cell membrane. It localises to the cytoplasmic vesicle membrane. The enzyme catalyses 2 iodide + L-tyrosine + 2 NADP(+) = 3,5-diiodo-L-tyrosine + 2 NADPH + H(+). It carries out the reaction iodide + L-tyrosine + NADP(+) = 3-iodo-L-tyrosine + NADPH. It catalyses the reaction 3-iodo-L-tyrosine + iodide + NADP(+) = 3,5-diiodo-L-tyrosine + NADPH + H(+). The catalysed reaction is L-tyrosine + chloride + NADP(+) = 3-chloro-L-tyrosine + NADPH. The enzyme catalyses bromide + L-tyrosine + NADP(+) = 3-bromo-L-tyrosine + NADPH. Catalyzes the dehalogenation of halotyrosines such as 3-bromo-L-tyrosine, 3-chloro-L-tyrosine, 3-iodo-L-tyrosine and 3,5-diiodo-L-tyrosine. During thyroid hormone biosynthesis, facilitates iodide salvage by catalysing the oxidative NADPH-dependent deiodination of the halogenated by-products of thyroid hormone production, monoiodotyrosine (L-MIT) and diiodotyrosine (L-DIT). The scavanged iodide can then reenter the hormone-producing pathways. Acts more efficiently on 3-iodo-L-tyrosine than 3,5-diiodo-L-tyrosine. The chain is Iodotyrosine deiodinase 1 (Iyd) from Rattus norvegicus (Rat).